The sequence spans 2273 residues: Acetyl-CoA carboxylase, mitochondrial (2273 aa).

The transit peptide at 1–104 directs the protein to the mitochondrion; sequence KGKTITHGQS…RGNIHKHTRL (104 aa). The 502-residue stretch at 134–635 folds into the Biotin carboxylation domain; the sequence is VISKILIANN…STGWLDDLIL (502 aa). The ATP-grasp domain maps to 292–484; that stretch reads KTNFVSVPDD…LPATQLQIAM (193 aa). Residue 332–337 participates in ATP binding; the sequence is GGGGKG. The active site involves Arg459. The region spanning 763 to 837 is the Biotinyl-binding domain; that stretch reads LEAELNPTQV…EAGDVIAKLT (75 aa). The residue at position 804 (Lys804) is an N6-biotinyllysine. Residues 1532–1867 enclose the CoA carboxyltransferase N-terminal domain; the sequence is PYSVKDWLQP…KRDMSPPLLE (336 aa). Residues 1532-2187 are carboxyltransferase; that stretch reads PYSVKDWLQP…EGQVIKRLQK (656 aa). 3 residues coordinate CoA: Arg1776, Lys2080, and Arg2082. The CoA carboxyltransferase C-terminal domain occupies 1871–2187; that stretch reads RWDRDVDFKP…EGQVIKRLQK (317 aa).

Biotin is required as a cofactor.

The protein resides in the mitochondrion. It carries out the reaction hydrogencarbonate + acetyl-CoA + ATP = malonyl-CoA + ADP + phosphate + H(+). The catalysed reaction is N(6)-biotinyl-L-lysyl-[protein] + hydrogencarbonate + ATP = N(6)-carboxybiotinyl-L-lysyl-[protein] + ADP + phosphate + H(+). It participates in lipid metabolism; malonyl-CoA biosynthesis; malonyl-CoA from acetyl-CoA: step 1/1. In terms of biological role, catalyzes the rate-limiting reaction in the mitochondrial fatty acid synthesis (FAS) type II pathway. Responsible for the production of the mitochondrial malonyl-CoA, used for the biosynthesis of the cofactor lipoic acid. This protein carries three functions: biotin carboxyl carrier protein, biotin carboxylase, and carboxyltransferase. In Saccharomyces cerevisiae (strain JAY291) (Baker's yeast), this protein is Acetyl-CoA carboxylase, mitochondrial (HFA1).